We begin with the raw amino-acid sequence, 316 residues long: Adenine deaminase (316 aa).

Residues His-14, His-16, and His-194 each contribute to the Zn(2+) site. Glu-197 acts as the Proton donor in catalysis. Asp-275 contributes to the Zn(2+) binding site. Position 276 (Asp-276) interacts with substrate.

This sequence belongs to the metallo-dependent hydrolases superfamily. Adenosine and AMP deaminases family. Adenine deaminase type 2 subfamily. Zn(2+) serves as cofactor.

It catalyses the reaction adenine + H2O + H(+) = hypoxanthine + NH4(+). Its function is as follows. Catalyzes the hydrolytic deamination of adenine to hypoxanthine. Plays an important role in the purine salvage pathway and in nitrogen catabolism. This chain is Adenine deaminase, found in Pseudomonas aeruginosa (strain LESB58).